The sequence spans 338 residues: Probable tRNA pseudouridine synthase B (338 aa).

The active-site Nucleophile is Asp80. Residues 247–322 (LPRIEIRDTA…IMVDTKRVLM (76 aa)) form the PUA domain.

It belongs to the pseudouridine synthase TruB family. Type 2 subfamily.

It catalyses the reaction uridine(55) in tRNA = pseudouridine(55) in tRNA. In terms of biological role, could be responsible for synthesis of pseudouridine from uracil-55 in the psi GC loop of transfer RNAs. The sequence is that of Probable tRNA pseudouridine synthase B from Methanopyrus kandleri (strain AV19 / DSM 6324 / JCM 9639 / NBRC 100938).